A 94-amino-acid chain; its full sequence is Putative pterin-4-alpha-carbinolamine dehydratase (94 aa).

The protein belongs to the pterin-4-alpha-carbinolamine dehydratase family.

It catalyses the reaction (4aS,6R)-4a-hydroxy-L-erythro-5,6,7,8-tetrahydrobiopterin = (6R)-L-erythro-6,7-dihydrobiopterin + H2O. The protein is Putative pterin-4-alpha-carbinolamine dehydratase of Mycobacteroides abscessus (strain ATCC 19977 / DSM 44196 / CCUG 20993 / CIP 104536 / JCM 13569 / NCTC 13031 / TMC 1543 / L948) (Mycobacterium abscessus).